A 356-amino-acid polypeptide reads, in one-letter code: Terpene synthase 10 (356 aa).

The short motif at 90–95 (DDYLDS) is the DDxx(x)D/E motif element. The NDxxSxxxD/E motif signature appears at 232-240 (NDAVSYAKE).

The protein belongs to the terpene synthase family.

It catalyses the reaction geranylgeranyl diphosphate = beta-araneosene + diphosphate. In terms of biological role, terpene synthase that converts its substrate farnesyl diphosphate (FPP) into several unidentified sesquiterpenes. TPS10 also converts geranylgeranyl diphosphate (GGPP) into the diterpene beta-araneosene. In Dictyostelium purpureum (Slime mold), this protein is Terpene synthase 10.